The following is a 165-amino-acid chain: uncharacterized protein (165 aa).

This is an uncharacterized protein from Homo sapiens (Human).